Reading from the N-terminus, the 565-residue chain is Effector protease OspD3 (565 aa).

It belongs to the Toxin_15 family.

The protein resides in the secreted. Effector protease that disrupts necroptosis in host cells by mediating proteolytic cleavage of host RIPK1 and RIPK3. The sequence is that of Effector protease OspD3 from Shigella flexneri.